Here is a 235-residue protein sequence, read N- to C-terminus: MRPSGRNNDQLRNLKVTHNFTKHAEGSVLIEFGDTKVICTASVVAGVPEFKKDSGEGWLTAEYGMLPRSTHTRMDREAARGKQSGRTQEIQRLIGRALRASVDLTAIGENTIKVDCDVIQADGGTRTASITGASLAIADAIEYMKQNGMLDEQANPLLSQVAAISVGIYNNEPVLDLDYDEDSNAETDMNVVMNSNGGIIEIQGTAEGKDFSEEEFAKMLGLAKKGIKEIFATVF.

Residues R86 and 124-126 (GTR) contribute to the phosphate site.

Belongs to the RNase PH family. Homohexameric ring arranged as a trimer of dimers.

It catalyses the reaction tRNA(n+1) + phosphate = tRNA(n) + a ribonucleoside 5'-diphosphate. In terms of biological role, phosphorolytic 3'-5' exoribonuclease that plays an important role in tRNA 3'-end maturation. Removes nucleotide residues following the 3'-CCA terminus of tRNAs; can also add nucleotides to the ends of RNA molecules by using nucleoside diphosphates as substrates, but this may not be physiologically important. Probably plays a role in initiation of 16S rRNA degradation (leading to ribosome degradation) during starvation. This chain is Ribonuclease PH, found in Francisella tularensis subsp. novicida (strain U112).